Consider the following 276-residue polypeptide: Rhomboid protease GlpG (276 aa).

The next 6 helical transmembrane spans lie at 94-114 (GPVT…MSLI), 142-162 (IFMH…WYLG), 169-189 (LGSG…GYVQ), 192-212 (FSGP…GYVW), 229-249 (LIIF…GMSM), and 250-270 (ANGA…VDTL). Catalysis depends on Ser201, which acts as the Nucleophile. His254 is an active-site residue.

Belongs to the peptidase S54 family.

It is found in the cell inner membrane. The enzyme catalyses Cleaves type-1 transmembrane domains using a catalytic dyad composed of serine and histidine that are contributed by different transmembrane domains.. In terms of biological role, rhomboid-type serine protease that catalyzes intramembrane proteolysis. The protein is Rhomboid protease GlpG of Salmonella choleraesuis (strain SC-B67).